The sequence spans 492 residues: Protein nucleotidyltransferase YdiU (492 aa).

Residues glycine 90, glycine 92, arginine 93, lysine 113, aspartate 125, glycine 126, arginine 176, and arginine 183 each coordinate ATP. Aspartate 252 acts as the Proton acceptor in catalysis. Residues asparagine 253 and aspartate 262 each coordinate Mg(2+). ATP is bound at residue aspartate 262.

The protein belongs to the SELO family. Mg(2+) serves as cofactor. Mn(2+) is required as a cofactor.

The catalysed reaction is L-seryl-[protein] + ATP = 3-O-(5'-adenylyl)-L-seryl-[protein] + diphosphate. It carries out the reaction L-threonyl-[protein] + ATP = 3-O-(5'-adenylyl)-L-threonyl-[protein] + diphosphate. It catalyses the reaction L-tyrosyl-[protein] + ATP = O-(5'-adenylyl)-L-tyrosyl-[protein] + diphosphate. The enzyme catalyses L-histidyl-[protein] + UTP = N(tele)-(5'-uridylyl)-L-histidyl-[protein] + diphosphate. The catalysed reaction is L-seryl-[protein] + UTP = O-(5'-uridylyl)-L-seryl-[protein] + diphosphate. It carries out the reaction L-tyrosyl-[protein] + UTP = O-(5'-uridylyl)-L-tyrosyl-[protein] + diphosphate. In terms of biological role, nucleotidyltransferase involved in the post-translational modification of proteins. It can catalyze the addition of adenosine monophosphate (AMP) or uridine monophosphate (UMP) to a protein, resulting in modifications known as AMPylation and UMPylation. The chain is Protein nucleotidyltransferase YdiU from Thioalkalivibrio sulfidiphilus (strain HL-EbGR7).